Reading from the N-terminus, the 620-residue chain is Glutathione-regulated potassium-efflux system protein KefC (620 aa).

The next 12 helical transmembrane spans lie at 4–24, 26–46, 54–74, 90–110, 114–134, 149–169, 178–198, 218–238, 270–290, 294–314, 327–347, and 359–379; these read HTLI…PIAV, LGLG…PWGL, SILH…GLEL, GALQ…LLGL, VAEL…MQAM, FAVL…IPLL, MGAF…VVLL, VFSA…EEVG, GLLL…GTLL, LRIV…LWLI, WFAV…GAAQ, and SLTL…VILN. The 120-residue stretch at 399–518 folds into the RCK N-terminal domain; sequence QPRVIIAGFG…AGVEKPERET (120 aa). The disordered stretch occupies residues 597 to 620; sequence GWQGTEEGKHTGNMADEPETKPSS.

The protein belongs to the monovalent cation:proton antiporter 2 (CPA2) transporter (TC 2.A.37) family. KefC subfamily. Homodimer. Interacts with the regulatory subunit KefF.

It is found in the cell inner membrane. Functionally, pore-forming subunit of a potassium efflux system that confers protection against electrophiles. Catalyzes K(+)/H(+) antiport. The protein is Glutathione-regulated potassium-efflux system protein KefC of Escherichia coli O6:K15:H31 (strain 536 / UPEC).